A 588-amino-acid chain; its full sequence is Transcriptional regulatory protein ASH1 (588 aa).

A Phosphoserine modification is found at Ser56. Disordered regions lie at residues 85 to 109, 377 to 398, and 417 to 495; these read SNTA…GNSP, SNNS…QASN, and SSVS…TRHT. Polar residues predominate over residues 99–109; sequence PISSLTPGNSP. Positions 383-392 are enriched in basic residues; sequence NVRKPSKNKI. Residues 417–433 are compositionally biased toward low complexity; sequence SSVSASSSPSPSTPTKS. Phosphoserine is present on Ser465. The segment covering 470–493 has biased composition (low complexity); it reads PRRSSNSSITKKGSRRSSGSSPTR. Residues 499 to 526 form a GATA-type; atypical zinc finger; the sequence is CVSCHSSDSPCWRPSWSPRKQDQLCNSC.

As to quaternary structure, component of the RPD3C(L) complex composed of at least ASH1, CTI6, DEP1, PHO23, RPD3, RXT2, RXT3, SAP30, SDS3, SIN3, UME1 and UME6.

Its subcellular location is the nucleus. Its function is as follows. Component of the RPD3C(L) histone deacetylase complex (HDAC). Responsible for the deacetylation of lysine residues on the N-terminal part of the core histones (H2A, H2B, H3 and H4). Histone deacetylation gives a tag for epigenetic repression and plays an important role in transcriptional regulation, cell cycle progression and developmental events. ASH1 is necessary to repress HO in daughter cells to block mating-type switching through its binding to HO promoter 5'-YTGAT-3' sites. Also involved in pseudohyphal growth. This Saccharomyces cerevisiae (strain ATCC 204508 / S288c) (Baker's yeast) protein is Transcriptional regulatory protein ASH1 (ASH1).